The following is a 134-amino-acid chain: Isocitrate dehydrogenase [NAD] subunit alpha, mitochondrial (134 aa).

N6-succinyllysine is present on lysine 37. Threonine 50 carries the phosphothreonine modification. 3 residues coordinate substrate: arginine 64, arginine 74, and arginine 95.

Belongs to the isocitrate and isopropylmalate dehydrogenases family. As to quaternary structure, heterooligomer of subunits alpha (IDH3A), beta (IDH3B), and gamma (IDH3G) in the apparent ratio of 2:1:1. The heterodimer containing one IDH3A and one IDH3B subunit and the heterodimer containing one IDH3A and one IDH3G subunit assemble into a heterotetramer (which contains two subunits of IDH3A, one of IDH3B and one of IDH3G) and further into the heterooctamer. Requires Mg(2+) as cofactor. Mn(2+) serves as cofactor.

The protein localises to the mitochondrion. The catalysed reaction is D-threo-isocitrate + NAD(+) = 2-oxoglutarate + CO2 + NADH. The heterotetramer and the heterodimer composed of IDH3A and IDH3G subunits can be allosterically activated by citrate (CIT) or/and ADP, and the two activators can act independently or synergistically. The heterodimer composed of IDH3A and IDH3B subunits cannot be allosterically regulated and the allosteric regulation of the heterotetramer is through the IDH3G subunit and not the IDH3B subunit. The IDH3G subunit contains the allosteric site which consists of a CIT-binding site and an ADP-binding site, and the binding of CIT and ADP causes conformational changes at the allosteric site which are transmitted to the active site in the catalytic subunit (IDH3A) through a cascade of conformational changes at the heterodimer interface, leading to stabilization of the isocitrate-binding at the active site and thus activation of the enzyme. ATP can activate the heterotetramer and the heterodimer composed of IDH3A and IDH3G subunits at low concentrations but inhibits their activities at high concentrations, whereas ATP exhibits only inhibitory effect on the heterodimer composed of IDH3A and IDH3B subunits. In terms of biological role, catalytic subunit of the enzyme which catalyzes the decarboxylation of isocitrate (ICT) into alpha-ketoglutarate. The heterodimer composed of the alpha (IDH3A) and beta (IDH3B) subunits and the heterodimer composed of the alpha (IDH3A) and gamma (IDH3G) subunits, have considerable basal activity but the full activity of the heterotetramer (containing two subunits of IDH3A, one of IDH3B and one of IDH3G) requires the assembly and cooperative function of both heterodimers. This chain is Isocitrate dehydrogenase [NAD] subunit alpha, mitochondrial, found in Mesocricetus auratus (Golden hamster).